A 185-amino-acid polypeptide reads, in one-letter code: MAGELIKEAESNMKKTIEVVKKEFASLRAGRATPALLDKVMVNYYGTPTPVNQLANISVPEARLLVVQPWDKTVLPEIERAILKSDLGITPASDGNVIRLAIPQLTQERRAELMKVIKKKAEEGRVAIRNIRRDTNEQLKSQQKDGKMSEDELKRSQDEVQKLTDRYIKEIDSLLSTKEQEIMQV.

The tract at residues 136–159 is disordered; the sequence is NEQLKSQQKDGKMSEDELKRSQDE.

It belongs to the RRF family.

Its subcellular location is the cytoplasm. Responsible for the release of ribosomes from messenger RNA at the termination of protein biosynthesis. May increase the efficiency of translation by recycling ribosomes from one round of translation to another. This is Ribosome-recycling factor from Pelotomaculum thermopropionicum (strain DSM 13744 / JCM 10971 / SI).